The primary structure comprises 1043 residues: MPPGVDCPMEFWTKEESQSVVVDFLLPTGVYLNFPVSRNANLSTIKQVLWHRAQYEPLFHMLSDPEAYVFTCVNQTAEQQELEDEQRRLCDIQPFLPVLRLVAREGDRVKKLINSQISLLIGKGLHEFDSLRDPEVNDFRTKMRQFCEEAAAHRQQLGWVEWLQYSFPLQLEPSARGWRAGLLRVSNRALLVNVKFEGSEESFTFQVSTKDMPLALMACALRKKATVFRQPLVEQPEEYALQVNGRHEYLYGNYPLCHFQYICSCLHSGLTPHLTMVHSSSILAMRDEQSNPAPQVQKPRAKPPPIPAKKPSSVSLWSLEQPFSIELIEGRKVNADERMKLVVQAGLFHGNEMLCKTVSSSEVNVCSEPVWKQRLEFDISVCDLPRMARLCFALYAVVEKAKKARSTKKKSKKADCPIAWANLMLFDYKDQLKTGERCLYMWPSVPDEKGELLNPAGTVRGNPNTESAAALVIYLPEVAPHPVYFPALEKILELGRHGERGRITEEELQLREILERRGSGELYEHEKDLVWKMRHEVQEHFPEALARLLLVTKWNKHEDVAQMLYLLCSWPELPVLSALELLDFSFPDCYVGSFAIKSLRKLTDDELFQYLLQLVQVLKYESYLDCELTKFLLGRALANRKIGHFLFWHLRSEMHVPSVALRFGLIMEAYCRGSTHHMKVLMKQGEALSKLKALNDFVKVSSQKTTKPQTKEMMHMCMRQETYMEALSHLQSPLDPSTLLEEVCVEQCTFMDSKMKPLWIMYSSEEAGSAGNVGIIFKNGDDLRQDMLTLQMIQLMDVLWKQEGLDLRMTPYGCLPTGDRTGLIEVVLHSDTIANIQLNKSNMAATAAFNKDALLNWLKSKNPGEALDRAIEEFTLSCAGYCVATYVLGIGDRHSDNIMIRESGQLFHIDFGHFLGNFKTKFGINRERVPFILTYDFVHVIQQGKTNNSEKFERFRGYCERAYTILRRHGLLFLHLFALMRAAGLPELSCSKDIQYLKDSLALGKTEEEALKHFRVKFNEALRESWKTKVNWLAHNVSKDNRQ.

A PI3K-ABD domain is found at 16 to 105 (ESQSVVVDFL…LPVLRLVARE (90 aa)). Positions 187 to 278 (NRALLVNVKF…GLTPHLTMVH (92 aa)) constitute a PI3K-RBD domain. Residues 287 to 312 (DEQSNPAPQVQKPRAKPPPIPAKKPS) are disordered. The 158-residue stretch at 319–476 (LEQPFSIELI…SAAALVIYLP (158 aa)) folds into the C2 PI3K-type domain. In terms of domain architecture, PIK helical spans 496-673 (RHGERGRITE…GLIMEAYCRG (178 aa)). Tyr523 is modified (phosphotyrosine). Residues 744-1026 (CVEQCTFMDS…KFNEALRESW (283 aa)) enclose the PI3K/PI4K catalytic domain. The tract at residues 750–756 (FMDSKMK) is G-loop. The catalytic loop stretch occupies residues 889 to 897 (GIGDRHSDN). The segment at 908–934 (HIDFGHFLGNFKTKFGINRERVPFILT) is activation loop. The residue at position 1038 (Ser1038) is a Phosphoserine; by autocatalysis.

Belongs to the PI3/PI4-kinase family. Heterodimer of a catalytic subunit PIK3CD and a p85 regulatory subunit (PIK3R1, PIK3R2 or PIK3R3). Interacts with ERAS and HRAS. Post-translationally, autophosphorylation on Ser-1038 results in the almost complete inactivation of the lipid kinase activity. Abundantly expressed in adult mouse spleen as well as in testis. Isoform 1 is expressed in spleen and lung (at protein level). Isoform 1 is expressed predominantly in leukocytes.

It is found in the cytoplasm. The enzyme catalyses a 1,2-diacyl-sn-glycero-3-phospho-(1D-myo-inositol-4,5-bisphosphate) + ATP = a 1,2-diacyl-sn-glycero-3-phospho-(1D-myo-inositol-3,4,5-trisphosphate) + ADP + H(+). It catalyses the reaction a 1,2-diacyl-sn-glycero-3-phospho-(1D-myo-inositol) + ATP = a 1,2-diacyl-sn-glycero-3-phospho-(1D-myo-inositol-3-phosphate) + ADP + H(+). It carries out the reaction 1-octadecanoyl-2-(5Z,8Z,11Z,14Z)-eicosatetraenoyl-sn-glycero-3-phospho-1D-myo-inositol 4,5-bisphosphate + ATP = 1-octadecanoyl-2-(5Z,8Z,11Z,14Z-eicosatetraenoyl)-sn-glycero-3-phospho-(1D-myo-inositol 3,4,5-triphosphate) + ADP + H(+). It functions in the pathway phospholipid metabolism; phosphatidylinositol phosphate biosynthesis. With respect to regulation, activated by growth factors and cytokine receptors through a tyrosine-kinase-dependent mechanism. Activated by RAS. IC87114 inhibits lipid kinase activity and is selective in cells at doses up to 5-10 uM. Among other effects, IC87114 reduces allergic responses, prevents the recruitment of antigen-specific T cells into target tissue, and affects natural killer cell chemotaxis. Phosphoinositide-3-kinase (PI3K) phosphorylates phosphatidylinositol (PI) and its phosphorylated derivatives at position 3 of the inositol ring to produce 3-phosphoinositides. Uses ATP and PtdIns(4,5)P2 (phosphatidylinositol 4,5-bisphosphate) to generate phosphatidylinositol 3,4,5-trisphosphate (PIP3). PIP3 plays a key role by recruiting PH domain-containing proteins to the membrane, including AKT1 and PDPK1, activating signaling cascades involved in cell growth, survival, proliferation, motility and morphology. Mediates immune responses. Plays a role in B-cell development, proliferation, migration, and function. Required for B-cell receptor (BCR) signaling. Mediates B-cell proliferation response to anti-IgM, anti-CD40 and IL4 stimulation. Promotes cytokine production in response to TLR4 and TLR9. Required for antibody class switch mediated by TLR9. Involved in the antigen presentation function of B-cells. Involved in B-cell chemotaxis in response to CXCL13 and sphingosine 1-phosphate (S1P). Required for proliferation, signaling and cytokine production of naive, effector and memory T-cells. Required for T-cell receptor (TCR) signaling. Mediates TCR signaling events at the immune synapse. Activation by TCR leads to antigen-dependent memory T-cell migration and retention to antigenic tissues. Together with PIK3CG participates in T-cell development. Contributes to T-helper cell expansion and differentiation. Required for T-cell migration mediated by homing receptors SELL/CD62L, CCR7 and S1PR1 and antigen dependent recruitment of T-cells. Together with PIK3CG is involved in natural killer (NK) cell development and migration towards the sites of inflammation. Participates in NK cell receptor activation. Plays a role in NK cell maturation and cytokine production. Together with PIK3CG is involved in neutrophil chemotaxis and extravasation. Together with PIK3CG participates in neutrophil respiratory burst. Plays important roles in mast-cell development and mast cell mediated allergic response. Involved in stem cell factor (SCF)-mediated proliferation, adhesion and migration. Required for allergen-IgE-induced degranulation and cytokine release. The lipid kinase activity is required for its biological function. The sequence is that of Phosphatidylinositol 4,5-bisphosphate 3-kinase catalytic subunit delta isoform (Pik3cd) from Mus musculus (Mouse).